The chain runs to 72 residues: Protein SlyX homolog (72 aa).

Belongs to the SlyX family.

The sequence is that of Protein SlyX homolog from Vibrio cholerae serotype O1 (strain ATCC 39541 / Classical Ogawa 395 / O395).